The chain runs to 98 residues: Flagellar hook-basal body complex protein FliE (98 aa).

The tract at residues 22 to 56 (KTDNATGAGNTFTQMLDSMSDTQSNAQTSVSNLLT) is disordered. Positions 23–56 (TDNATGAGNTFTQMLDSMSDTQSNAQTSVSNLLT) are enriched in polar residues.

This sequence belongs to the FliE family.

The protein localises to the bacterial flagellum basal body. This is Flagellar hook-basal body complex protein FliE from Listeria innocua serovar 6a (strain ATCC BAA-680 / CLIP 11262).